The sequence spans 287 residues: DegV domain-containing protein DR_0500 (287 aa).

The DegV domain occupies 7-280; it reads FAVVTDGGLD…PRALGVAAAP (274 aa). 2 residues coordinate hexadecanoate: S62 and S93.

Its function is as follows. May bind long-chain fatty acids, such as palmitate, and may play a role in lipid transport or fatty acid metabolism. This is DegV domain-containing protein DR_0500 from Deinococcus radiodurans (strain ATCC 13939 / DSM 20539 / JCM 16871 / CCUG 27074 / LMG 4051 / NBRC 15346 / NCIMB 9279 / VKM B-1422 / R1).